Consider the following 124-residue polypeptide: MVKLTSIAAGVAAIAAGVAAAPATTTLSPSDERVNLVELGVYVSDIRAHLAQYYLFQAAHPSETYPVEIAEAVFNYGDFTTMLTGIPAEQVTRVITGVPWYSTRLRPAISSALSKDGIYTAIPK.

An N-terminal signal peptide occupies residues 1 to 20 (MVKLTSIAAGVAAIAAGVAA).

Belongs to the SRP1/TIP1 family. Seripauperin subfamily.

The polypeptide is Seripauperin-15 (PAU15) (Saccharomyces cerevisiae (strain ATCC 204508 / S288c) (Baker's yeast)).